A 160-amino-acid polypeptide reads, in one-letter code: Non-secretory ribonuclease (160 aa).

A signal peptide spans 1 to 27 (MVPKLFTSPICLLLLLGLMGVEGSLHA). Trp-34 carries C-linked (Man) tryptophan glycosylation. His-42 (proton acceptor) is an active-site residue. Asn-44 carries N-linked (GlcNAc...) asparagine glycosylation. Intrachain disulfides connect Cys-50/Cys-110, Cys-64/Cys-122, Cys-82/Cys-137, and Cys-89/Cys-98. A 3'-nitrotyrosine modification is found at Tyr-60. 65 to 69 (KNQNT) is a substrate binding site. N-linked (GlcNAc...) asparagine glycosylation is found at Asn-92, Asn-111, and Asn-138. His-155 functions as the Proton donor in the catalytic mechanism.

Belongs to the pancreatic ribonuclease family. Interacts with and forms a tight 1:1 complex with RNH1. Dimerization of two such complexes may occur.

Its subcellular location is the lysosome. It localises to the cytoplasmic granule. It carries out the reaction an [RNA] containing cytidine + H2O = an [RNA]-3'-cytidine-3'-phosphate + a 5'-hydroxy-ribonucleotide-3'-[RNA].. The catalysed reaction is an [RNA] containing uridine + H2O = an [RNA]-3'-uridine-3'-phosphate + a 5'-hydroxy-ribonucleotide-3'-[RNA].. This is a non-secretory ribonuclease. It is a pyrimidine specific nuclease with a slight preference for U. Cytotoxin and helminthotoxin. Possesses a wide variety of biological activities. The sequence is that of Non-secretory ribonuclease (RNASE2) from Macaca nemestrina (Pig-tailed macaque).